Here is a 418-residue protein sequence, read N- to C-terminus: Serpin H1 (418 aa).

Positions 1-18 are cleaved as a signal peptide; that stretch reads MRALLLISTICLLARALA. An N6-succinyllysine modification is found at lysine 94. N-linked (GlcNAc...) asparagine glycans are attached at residues asparagine 120 and asparagine 125. Serine 141 carries the post-translational modification Phosphoserine. The residue at position 207 (lysine 207) is an N6-acetyllysine. Lysine 296 is modified (N6-succinyllysine). An N6-acetyllysine modification is found at lysine 319. A Prevents secretion from ER motif is present at residues 415–418; that stretch reads RDEL.

This sequence belongs to the serpin family.

Its subcellular location is the endoplasmic reticulum lumen. In terms of biological role, binds specifically to collagen. Could be involved as a chaperone in the biosynthetic pathway of collagen. This Bos taurus (Bovine) protein is Serpin H1 (SERPINH1).